The sequence spans 400 residues: Argininosuccinate synthase (400 aa).

Residue 9 to 17 (AYSGGLDTS) participates in ATP binding. Tyrosine 87 provides a ligand contact to L-citrulline. Glycine 117 contacts ATP. L-aspartate-binding residues include threonine 119, asparagine 123, and aspartate 124. Asparagine 123 is an L-citrulline binding site. Residues arginine 127, serine 176, serine 185, glutamate 261, and tyrosine 273 each coordinate L-citrulline.

Belongs to the argininosuccinate synthase family. Type 1 subfamily. Homotetramer.

Its subcellular location is the cytoplasm. It carries out the reaction L-citrulline + L-aspartate + ATP = 2-(N(omega)-L-arginino)succinate + AMP + diphosphate + H(+). Its pathway is amino-acid biosynthesis; L-arginine biosynthesis; L-arginine from L-ornithine and carbamoyl phosphate: step 2/3. In Chlorobium limicola (strain DSM 245 / NBRC 103803 / 6330), this protein is Argininosuccinate synthase.